A 193-amino-acid polypeptide reads, in one-letter code: Ribonuclease HII (193 aa).

In terms of domain architecture, RNase H type-2 spans 1 to 193 (MTLGIDEAGR…SFALKNNWFS (193 aa)). Positions 6, 7, and 103 each coordinate a divalent metal cation.

Belongs to the RNase HII family. Requires Mn(2+) as cofactor. Mg(2+) serves as cofactor.

The protein resides in the cytoplasm. The enzyme catalyses Endonucleolytic cleavage to 5'-phosphomonoester.. In terms of biological role, endonuclease that specifically degrades the RNA of RNA-DNA hybrids. This chain is Ribonuclease HII, found in Helicobacter acinonychis (strain Sheeba).